The following is a 624-amino-acid chain: MSPSAAVLIPLAAAVLLRPVVGQTQCGGNLYTPGTLNFTLECYNAFQDCVAQFEANASQVDCNDGKGNLFMQQQANLGASPGSQNNDAIIAFQDIRDLCLLSGSTTATWGYSDNQWYWAAAEDACYTNDPTRTDVVKTHPAPFCIQNRDSSLPECYPQPDATPPGGPLKVIKTAKTRNGFKSSARGWNTYGVQALVNGSQVVPSFAGQSGLFYTQKFVETQCGVLARPEFKKAGYDLCSLDSGWQATTAVDQHGRIIYNTTRFNLPELASWLHKRDLKLGVYITPGVPCLAHNQTILGTNIKIKDVLNGNNDQINCDFDFRKDGVQQWHDSVVAQWASWGVDMLKLDFLTPGSPSNGANLACDSSDAVRAYQKAIKKSGRKIRLDISWKLCRNETWLPIWSDLAESMRTDQDLDNYGTNTLMAWQVGQRAIENYRQYIGLQAQRNVPLTIYPDMDALFTVNPEHLAGVNDTIRYTVQNHWLGAGANLIIGGDMEQVDALGLKLTTSKQSIDAADFFAKYPMQPRNPGTGSNAAKQLQAWIGGPSDDHEAYVLIVNYGPDLGNGGFSTKLYGKQKVTVSLKDLGISGSAWTFTDIWSGKSSRVTGSYSAWLTEGESQLLRLKRTH.

The signal sequence occupies residues 1 to 22 (MSPSAAVLIPLAAAVLLRPVVG). Asparagine 37, asparagine 56, asparagine 197, asparagine 259, and asparagine 293 each carry an N-linked (GlcNAc...) asparagine glycan. The active-site Nucleophile is the aspartate 347. Residue asparagine 393 is glycosylated (N-linked (GlcNAc...) asparagine). Residue aspartate 412 is the Proton donor of the active site. N-linked (GlcNAc...) asparagine glycosylation occurs at asparagine 469.

This sequence belongs to the glycosyl hydrolase 27 family.

The protein resides in the secreted. It carries out the reaction Hydrolysis of terminal, non-reducing alpha-D-galactose residues in alpha-D-galactosides, including galactose oligosaccharides, galactomannans and galactolipids.. Alpha-galactosidase involved in the degradation of simple oligosaccharides like melibiose, raffinose and stachyose, and of polymeric galacto(gluco)mannans. In Hypocrea jecorina (Trichoderma reesei), this protein is Alpha-galactosidase 3 (agl3).